The primary structure comprises 601 residues: Translation initiation factor IF-2 (601 aa).

The segment at 54-101 is disordered; that stretch reads GHTASAEPAPAQASGSPASPAQTEAQEAPQPTATATAEREPAAPPARE. The span at 57–89 shows a compositional bias: low complexity; sequence ASAEPAPAQASGSPASPAQTEAQEAPQPTATAT. A tr-type G domain is found at 104–273; sequence HRAPVVTIMG…SLTAELEDLR (170 aa). Residues 113 to 120 are G1; sequence GHVDHGKT. Residue 113 to 120 participates in GTP binding; sequence GHVDHGKT. Residues 138–142 are G2; sequence GITQH. The segment at 159–162 is G3; that stretch reads DTPG. GTP contacts are provided by residues 159-163 and 213-216; these read DTPGH and NKVD. The G4 stretch occupies residues 213-216; the sequence is NKVD. The G5 stretch occupies residues 249 to 251; that stretch reads SAK.

Belongs to the TRAFAC class translation factor GTPase superfamily. Classic translation factor GTPase family. IF-2 subfamily.

The protein localises to the cytoplasm. Its function is as follows. One of the essential components for the initiation of protein synthesis. Protects formylmethionyl-tRNA from spontaneous hydrolysis and promotes its binding to the 30S ribosomal subunits. Also involved in the hydrolysis of GTP during the formation of the 70S ribosomal complex. This chain is Translation initiation factor IF-2, found in Deinococcus geothermalis (strain DSM 11300 / CIP 105573 / AG-3a).